A 76-amino-acid chain; its full sequence is MNKNRMKSLKEDYKHFAFTLLAVSTFLYIGAVLPDQGLTLGQKSTMFLADCVFLAGAFFCADRSLIYKKRLEEADE.

Helical transmembrane passes span Phe-16 to Leu-33 and Thr-45 to Ala-61.

The protein resides in the cell membrane. This is an uncharacterized protein from Bacillus subtilis (strain 168).